The following is a 391-amino-acid chain: Phosphoglycerate kinase (391 aa).

Substrate contacts are provided by residues 21–23 (DLN), arginine 36, 59–62 (HLGR), arginine 113, and arginine 146. ATP is bound by residues lysine 197, glutamate 319, and 345–348 (GGDT).

This sequence belongs to the phosphoglycerate kinase family. Monomer.

Its subcellular location is the cytoplasm. It catalyses the reaction (2R)-3-phosphoglycerate + ATP = (2R)-3-phospho-glyceroyl phosphate + ADP. The protein operates within carbohydrate degradation; glycolysis; pyruvate from D-glyceraldehyde 3-phosphate: step 2/5. The protein is Phosphoglycerate kinase of Shewanella piezotolerans (strain WP3 / JCM 13877).